The following is a 920-amino-acid chain: Androgen receptor (920 aa).

The modulating stretch occupies residues 1–559 (MEVQLGLGRV…IDYYFPPQKT (559 aa)). The interval 1–587 (MEVQLGLGRV…GSCKVFFKRA (587 aa)) is interaction with ZNF318. Disordered regions lie at residues 36 to 167 (NPGP…LSLL) and 195 to 228 (QQQQ…YLGG). The segment covering 44-91 (AASAAPPGASLLLLQQQQQQQQQQQQQQQQQQQQQQQETSPRQQQQQQ) has biased composition (low complexity). Ser-83 carries the phosphoserine; by CDK9 modification. Position 96 is a phosphoserine (Ser-96). Over residues 195–217 (QQQQQEAVSEGSSSGRAREASGA) the composition is skewed to low complexity. A compositionally biased stretch (polar residues) spans 218-228 (PTSSKDNYLGG). Tyr-225 is subject to Phosphotyrosine; by CSK. Ser-258 bears the Phosphoserine mark. Position 269 is a phosphotyrosine; by CSK and TNK2 (Tyr-269). Residues Tyr-309, Tyr-348, Tyr-359, and Tyr-364 each carry the phosphotyrosine; by CSK modification. The residue at position 365 (Tyr-365) is a Phosphotyrosine; by CSK and TNK2. Residue Lys-388 forms a Glycyl lysine isopeptide (Lys-Gly) (interchain with G-Cter in SUMO) linkage. Tyr-395 is modified (phosphotyrosine; by CSK). Lys-521 is covalently cross-linked (Glycyl lysine isopeptide (Lys-Gly) (interchain with G-Cter in SUMO)). 2 positions are modified to phosphotyrosine; by CSK: Tyr-535 and Tyr-552. The interval 552-919 (YYFPPQKTCL…GKVKPIYFHT (368 aa)) is interaction with LPXN. 2 NR C4-type zinc fingers span residues 560-580 (CLIC…CGSC) and 596-620 (CASR…LRKC). Positions 560–632 (CLICGDEASG…AGMTLGARKL (73 aa)) form a DNA-binding region, nuclear receptor. An interaction with HIPK3 region spans residues 572-662 (YGALTCGSCK…TEETTQKLTV (91 aa)). The tract at residues 592–919 (QKYLCASRND…GKVKPIYFHT (328 aa)) is interaction with CCAR1. The interaction with KAT7 stretch occupies residues 625–919 (MTLGARKLKK…GKVKPIYFHT (295 aa)). The residue at position 651 (Ser-651) is a Phosphoserine; by STK4/MST1. Residues 669–900 (ECQPIFLNVL…DFPEMMAEII (232 aa)) enclose the NR LBD domain. 17beta-hydroxy-5alpha-androstan-3-one is bound by residues Asn-706 and Arg-753. Glycyl lysine isopeptide (Lys-Gly) (interchain with G-Cter in ubiquitin) cross-links involve residues Lys-846 and Lys-848. Thr-878 provides a ligand contact to 17beta-hydroxy-5alpha-androstan-3-one. Tyr-916 is subject to Phosphotyrosine; by CSK.

This sequence belongs to the nuclear hormone receptor family. NR3 subfamily. Binds DNA as a homodimer. Part of a ternary complex containing AR, EFCAB6/DJBP and PARK7. Interacts with HIPK3 and NR0B2 in the presence of androgen. The ligand binding domain interacts with KAT7/HBO1 in the presence of dihydrotestosterone. Interacts with EFCAB6/DJBP, PQBP1, RANBP9, RBAK, SPDEF, SRA1, TGFB1I1 and RREB1. Interacts with ZMIZ1/ZIMP10 and ZMIZ2/ZMIP7 which both enhance its transactivation activity. Interacts with SLC30A9 and RAD54L2/ARIP4. Interacts with MACROD1 (via macro domain). Interacts via the ligand-binding domain with LXXLL and FXXLF motifs from NCOA1, NCOA2, NCOA3 and MAGEA11. Interacts (via nuclear receptor DNA binding domain and nuclear receptor ligand binding domain) with NCOA4. The AR N-terminal poly-Gln region binds Ran resulting in enhancement of AR-mediated transactivation. Ran-binding decreases as the poly-Gln length increases. Interacts with HIP1 (via coiled coil domain). Interacts (via ligand-binding domain) with TRIM68. Interacts with TNK2. Interacts with USP26. Interacts with RNF6. Interacts (regulated by RNF6 probably through polyubiquitination) with RNF14; regulates AR transcriptional activity. Interacts with PRMT2 and TRIM24. Interacts with RACK1. Interacts with RANBP10; this interaction enhances dihydrotestosterone-induced AR transcriptional activity. Interacts with PRPF6 in a hormone-independent way; this interaction enhances dihydrotestosterone-induced AR transcriptional activity. Interacts with STK4/MST1. Interacts with ZIPK/DAPK3. Interacts with LPXN. Interacts with MAK. Part of a complex containing AR, MAK and NCOA3. Interacts with CRY1. Interacts with CCAR1 and GATA2. Interacts with ZNF318. Interacts with BUD31. Interacts with ARID4A. Interacts with ARID4B. Interacts (via NR LBD domain) with ZBTB7A; the interaction is direct and androgen-dependent. Interacts with NCOR1. Interacts with NCOR2. Interacts with CRY2 in a ligand-dependent manner. Sumoylated on Lys-388 (major) and Lys-521. Ubiquitinated. Deubiquitinated by USP26. 'Lys-6' and 'Lys-27'-linked polyubiquitination by RNF6 modulates AR transcriptional activity and specificity. Post-translationally, phosphorylated in prostate cancer cells in response to several growth factors including EGF. Phosphorylation is induced by c-Src kinase (CSK). Tyr-535 is one of the major phosphorylation sites and an increase in phosphorylation and Src kinase activity is associated with prostate cancer progression. Phosphorylation by TNK2 enhances the DNA-binding and transcriptional activity and may be responsible for androgen-independent progression of prostate cancer. Phosphorylation at Ser-83 by CDK9 regulates AR promoter selectivity and cell growth. Phosphorylation by PAK6 leads to AR-mediated transcription inhibition. In terms of processing, palmitoylated by ZDHHC7 and ZDHHC21. Palmitoylation is required for plasma membrane targeting and for rapid intracellular signaling via ERK and AKT kinases and cAMP generation. As to expression, mainly expressed in heart and skeletal muscle. In terms of tissue distribution, expressed in basal and stromal cells of the prostate (at protein level).

The protein localises to the nucleus. The protein resides in the cytoplasm. Its activity is regulated as follows. AIM-100 (4-amino-5,6-biaryl-furo[2,3-d]pyrimidine) suppresses TNK2-mediated phosphorylation at Tyr-269. Inhibits the binding of the Tyr-269 phosphorylated form to androgen-responsive enhancers (AREs) and its transcriptional activity. Functionally, steroid hormone receptors are ligand-activated transcription factors that regulate eukaryotic gene expression and affect cellular proliferation and differentiation in target tissues. Transcription factor activity is modulated by bound coactivator and corepressor proteins like ZBTB7A that recruits NCOR1 and NCOR2 to the androgen response elements/ARE on target genes, negatively regulating androgen receptor signaling and androgen-induced cell proliferation. Transcription activation is also down-regulated by NR0B2. Activated, but not phosphorylated, by HIPK3 and ZIPK/DAPK3. Lacks the C-terminal ligand-binding domain and may therefore constitutively activate the transcription of a specific set of genes independently of steroid hormones. The protein is Androgen receptor (AR) of Homo sapiens (Human).